Here is a 163-residue protein sequence, read N- to C-terminus: MASTNSFDVVSDFDRQEVVNTIDQALRDINTRYDLKDTKTTIELGENTITINTASDFTLDAVQTILVTKAVKRNLSPKLFDYGEAESASGGRVRQVITLRQGISKDDAKKITKMVKTDFKKVQASIQGDAVRISSKSKDDLQAVMQAVRDLDFPMPIQFTNYR.

This sequence belongs to the YajQ family.

Functionally, nucleotide-binding protein. The chain is Nucleotide-binding protein SYNPCC7002_A1983 from Picosynechococcus sp. (strain ATCC 27264 / PCC 7002 / PR-6) (Agmenellum quadruplicatum).